Consider the following 433-residue polypeptide: MNKPETVTENSLASDVAGPAPRHQTTKVMVGNVAVGGGAPIVVQSMTNTDTADVDSTVAQVAALARAGSEMVRITVDRDEAAAAVPHIREQLDKRGITTPLIGDFHYIGHKLLTEYPACAEALAKYRINPGNVGFKDKRDTQFSTIIELANKYGKPVRIGANWGSLDQELLSKLMDENAASANPRNARAVMREAMVQSALHSAERAQELGMPKDRIILSAKVSAVQDLIAVYQDLAARSDYAIHLGLTEAGMGSKGIVASSAALGILLQQGIGDTIRISLTPEPGGDRTLEVQVAQELLQTMGFRTFVPLVAACPGCGRTTSTTFQELARSIQDFIRDEMPTWKIKYPGVEALNVAVMGCIVNGPGESKHANIGISLPGTGEAPAAPVFVDGKKFRTLRGPTIAADFKALVIDYIDQRYGSGAKAPESVTAAE.

A compositionally biased stretch (polar residues) spans 1-13 (MNKPETVTENSLA). Residues 1–23 (MNKPETVTENSLASDVAGPAPRH) are disordered. Residues Cys314, Cys317, Cys360, and Glu367 each contribute to the [4Fe-4S] cluster site.

Belongs to the IspG family. [4Fe-4S] cluster is required as a cofactor.

It catalyses the reaction (2E)-4-hydroxy-3-methylbut-2-enyl diphosphate + oxidized [flavodoxin] + H2O + 2 H(+) = 2-C-methyl-D-erythritol 2,4-cyclic diphosphate + reduced [flavodoxin]. It participates in isoprenoid biosynthesis; isopentenyl diphosphate biosynthesis via DXP pathway; isopentenyl diphosphate from 1-deoxy-D-xylulose 5-phosphate: step 5/6. Its function is as follows. Converts 2C-methyl-D-erythritol 2,4-cyclodiphosphate (ME-2,4cPP) into 1-hydroxy-2-methyl-2-(E)-butenyl 4-diphosphate. This is 4-hydroxy-3-methylbut-2-en-1-yl diphosphate synthase (flavodoxin) from Bradyrhizobium sp. (strain ORS 278).